A 103-amino-acid polypeptide reads, in one-letter code: Large ribosomal subunit protein bL21 (103 aa).

Belongs to the bacterial ribosomal protein bL21 family. Part of the 50S ribosomal subunit. Contacts protein L20.

This protein binds to 23S rRNA in the presence of protein L20. This Kocuria rhizophila (strain ATCC 9341 / DSM 348 / NBRC 103217 / DC2201) protein is Large ribosomal subunit protein bL21.